A 445-amino-acid chain; its full sequence is Argininosuccinate synthase (445 aa).

ATP contacts are provided by residues 17–25 (AFSGGLDTS) and Ala-43. Residue Tyr-99 participates in L-citrulline binding. Gly-129 and Thr-131 together coordinate ATP. Thr-131, Asn-135, and Asp-136 together coordinate L-aspartate. Asn-135 contributes to the L-citrulline binding site. Position 136 (Asp-136) interacts with ATP. L-citrulline is bound by residues Arg-139 and Ser-192. Asp-194 serves as a coordination point for ATP. Positions 201, 203, and 280 each coordinate L-citrulline.

It belongs to the argininosuccinate synthase family. Type 2 subfamily. In terms of assembly, homotetramer.

The protein localises to the cytoplasm. The catalysed reaction is L-citrulline + L-aspartate + ATP = 2-(N(omega)-L-arginino)succinate + AMP + diphosphate + H(+). It functions in the pathway amino-acid biosynthesis; L-arginine biosynthesis; L-arginine from L-ornithine and carbamoyl phosphate: step 2/3. This Gemmatimonas aurantiaca (strain DSM 14586 / JCM 11422 / NBRC 100505 / T-27) protein is Argininosuccinate synthase.